A 227-amino-acid chain; its full sequence is Mitochondrial cardiolipin hydrolase (227 aa).

Residues 1–14 are Mitochondrial intermembrane-facing; that stretch reads MDVFKQMSFKELMK. A helical transmembrane segment spans residues 15 to 33; sequence VLGLGTVAFVLGVEWLNWL. Residues 34–227 are Cytoplasmic-facing; it reads TRRLRDSRGP…LQSKNGQIKK (194 aa). One can recognise a PLD phosphodiesterase domain in the interval 153–180; that stretch reads SAVHMHHKFALVDGRKLISGSLNWTLTA. Catalysis depends on residues His158, Lys160, and Asp165.

It belongs to the phospholipase D family. MitoPLD/Zucchini subfamily. As to quaternary structure, homodimer.

It is found in the mitochondrion outer membrane. The enzyme catalyses a cardiolipin + H2O = a 1,2-diacyl-sn-glycero-3-phospho-(1'-sn-glycerol) + a 1,2-diacyl-sn-glycero-3-phosphate + H(+). Functionally, presents phospholipase and nuclease activities, depending on the different physiological conditions. Plays a key role in mitochondrial fusion and fission via its phospholipase activity. In its phospholipase role, it uses the mitochondrial lipid cardiolipin as substrate to generate phosphatidate (PA or 1,2-diacyl-sn-glycero-3-phosphate), a second messenger signaling lipid. Production of PA facilitates Mitofusin-mediated fusion, whereas the cleavage of PA by the Lipin family of phosphatases produces diacylgycerol (DAG) which promotes mitochondrial fission. Regulates mitochondrial shape through facilitating mitochondrial fusion. During spermatogenesis, plays a critical role in PIWI-interacting RNA (piRNA) biogenesis. piRNAs provide essential protection against the activity of mobile genetic elements. piRNA-mediated transposon silencing is thus critical for maintaining genome stability, in particular in germline cells when transposons are mobilized as a consequence of wide-spread genomic demethylation. Has been shown to be a backbone-non-specific, single strand-specific nuclease, cleaving either RNA or DNA substrates with similar affinity. Produces 5' phosphate and 3' hydroxyl termini, suggesting it could directly participate in the processing of primary piRNA transcripts. Has been proposed to act as a cardiolipin hydrolase to generate phosphatidic acid at mitochondrial surface. Although it cannot be excluded that it can act as a phospholipase in some circumstances, this activity could not be confirmed. In Danio rerio (Zebrafish), this protein is Mitochondrial cardiolipin hydrolase (pld6).